The sequence spans 396 residues: Elongation factor Tu (396 aa).

Positions 10-206 (KPHVNVGTIG…ALDNYIPLPE (197 aa)) constitute a tr-type G domain. The tract at residues 19–26 (GHVDHGKT) is G1. 19–26 (GHVDHGKT) is a GTP binding site. T26 contributes to the Mg(2+) binding site. Residues 60-64 (GITIN) are G2. The tract at residues 81-84 (DCPG) is G3. GTP-binding positions include 81–85 (DCPGH) and 136–139 (NKCD). The tract at residues 136–139 (NKCD) is G4. The tract at residues 174 to 176 (SAK) is G5.

The protein belongs to the TRAFAC class translation factor GTPase superfamily. Classic translation factor GTPase family. EF-Tu/EF-1A subfamily. Monomer.

It localises to the cytoplasm. It carries out the reaction GTP + H2O = GDP + phosphate + H(+). GTP hydrolase that promotes the GTP-dependent binding of aminoacyl-tRNA to the A-site of ribosomes during protein biosynthesis. This is Elongation factor Tu from Polaromonas naphthalenivorans (strain CJ2).